The chain runs to 133 residues: MNYMPGTASLIEDIDKKHLVLLRDGRTLIGFLRSIDQFANLVLHQTVERIHVGKKYGDIPRGIFVVRGENVVLLGEIDLEKESDTPLQQVSIEEILEEQRVQQQTRLEAEKLKVQTLKDRGLSIPRADTLDEY.

Residues 5–80 enclose the Sm domain; that stretch reads PGTASLIEDI…VVLLGEIDLE (76 aa). Phosphoserine is present on serine 123. Threonine 129 bears the Phosphothreonine mark.

Belongs to the snRNP Sm proteins family. In terms of assembly, interacts with SLBP; interaction with SLBP occurs when histone mRNA is being rapidly degraded during the S phase. LSm subunits form a heteromer with a donut shape.

The protein localises to the cytoplasm. The protein resides in the P-body. In terms of biological role, plays a role in the degradation of histone mRNAs, the only eukaryotic mRNAs that are not polyadenylated. Probably also part of an LSm subunits-containing complex involved in the general process of mRNA degradation. The sequence is that of U6 snRNA-associated Sm-like protein LSm1 (Lsm1) from Mus musculus (Mouse).